A 192-amino-acid polypeptide reads, in one-letter code: Erythropoietin (192 aa).

The N-terminal stretch at 1–26 (MGVPDCLALPLLVTFLLLSLGLPVLG) is a signal peptide. Cys-33 and Cys-187 are oxidised to a cystine. 3 N-linked (GlcNAc...) asparagine glycosylation sites follow: Asn-50, Asn-64, and Asn-109.

The protein belongs to the EPO/TPO family.

Its subcellular location is the secreted. In terms of biological role, hormone involved in the regulation of erythrocyte proliferation and differentiation and the maintenance of a physiological level of circulating erythrocyte mass. Binds to EPOR leading to EPOR dimerization and JAK2 activation thereby activating specific downstream effectors, including STAT1 and STAT3. The polypeptide is Erythropoietin (EPO) (Nannospalax galili (Northern Israeli blind subterranean mole rat)).